A 236-amino-acid polypeptide reads, in one-letter code: Ubiquinone biosynthesis O-methyltransferase (236 aa).

Arginine 39, glycine 59, aspartate 80, and methionine 124 together coordinate S-adenosyl-L-methionine.

This sequence belongs to the methyltransferase superfamily. UbiG/COQ3 family.

The enzyme catalyses a 3-demethylubiquinol + S-adenosyl-L-methionine = a ubiquinol + S-adenosyl-L-homocysteine + H(+). It carries out the reaction a 3-(all-trans-polyprenyl)benzene-1,2-diol + S-adenosyl-L-methionine = a 2-methoxy-6-(all-trans-polyprenyl)phenol + S-adenosyl-L-homocysteine + H(+). It functions in the pathway cofactor biosynthesis; ubiquinone biosynthesis. Its function is as follows. O-methyltransferase that catalyzes the 2 O-methylation steps in the ubiquinone biosynthetic pathway. The chain is Ubiquinone biosynthesis O-methyltransferase from Shewanella putrefaciens (strain CN-32 / ATCC BAA-453).